The following is a 301-amino-acid chain: Cilia- and flagella-associated protein 161 (301 aa).

A disordered region spans residues 269–301 (GNPRDASSSMLDLPKPPTEDTRAMEQAMGLDTQ).

As to quaternary structure, microtubule inner protein component of sperm flagellar doublet microtubules. In terms of tissue distribution, expressed in airway epithelial cells.

It localises to the cytoplasm. Its subcellular location is the cytoskeleton. It is found in the cilium axoneme. The protein resides in the flagellum axoneme. In terms of biological role, microtubule inner protein (MIP) part of the dynein-decorated doublet microtubules (DMTs) in cilia axoneme, which is required for motile cilia beating. In Homo sapiens (Human), this protein is Cilia- and flagella-associated protein 161.